Reading from the N-terminus, the 555-residue chain is Urocanate hydratase (555 aa).

NAD(+)-binding positions include 51–52 (GG), Gln129, 175–177 (GMG), Glu195, 262–266 (QTSAH), 272–273 (YL), and Tyr321. Cys409 is a catalytic residue. Gly491 is an NAD(+) binding site.

Belongs to the urocanase family. The cofactor is NAD(+).

It localises to the cytoplasm. The catalysed reaction is 4-imidazolone-5-propanoate = trans-urocanate + H2O. It functions in the pathway amino-acid degradation; L-histidine degradation into L-glutamate; N-formimidoyl-L-glutamate from L-histidine: step 2/3. Its function is as follows. Catalyzes the conversion of urocanate to 4-imidazolone-5-propionate. The chain is Urocanate hydratase from Xanthomonas campestris pv. campestris (strain ATCC 33913 / DSM 3586 / NCPPB 528 / LMG 568 / P 25).